The chain runs to 202 residues: DNA polymerase III subunit epsilon (202 aa).

A divalent metal cation-binding residues include D23 and E25. Substrate is bound by residues D23 and E25. The active-site Proton acceptor is H162. D167 serves as a coordination point for a divalent metal cation. D167 lines the substrate pocket.

DNA polymerase III contains a core (composed of alpha, epsilon and theta chains) that associates with a tau subunit. This core dimerizes to form the POLIII' complex. PolIII' associates with the gamma complex (composed of gamma, delta, delta', psi and chi chains) and with the beta chain to form the complete DNA polymerase III complex. The cofactor is Mg(2+). Mn(2+) is required as a cofactor.

The catalysed reaction is DNA(n) + a 2'-deoxyribonucleoside 5'-triphosphate = DNA(n+1) + diphosphate. In terms of biological role, DNA polymerase III is a complex, multichain enzyme responsible for most of the replicative synthesis in bacteria. The epsilon subunit contain the editing function and is a proofreading 3'-5' exonuclease. This Aquifex aeolicus (strain VF5) protein is DNA polymerase III subunit epsilon (dnaQ).